A 453-amino-acid polypeptide reads, in one-letter code: MLRILCLALCSLLTGTRADPGALLRLGMDIMNQVQSAMDESHILEKMAAEAGKKQPGMKPIKGITNLKVKDVQLPVITLNFVPGVGIFQCVSTGMTVTGKSFMGGNMEIIVALNITATNRLLRDEETGLPVFKSEGCEVILVNVKTNLPSNMLPKMVNKFLDSTLHKVLPGLMCPAIDAVLVYVNRKWTNLSDPMPVGQMGTVKYVLMSAPATTASYIQLDFSPVVQQQKGKTIKLADAGEALTFPEGYAKGSSQLLLPATFLSAELALLQKSFHVNIQDTMIGELPPQTTKTLARFIPEVAVAYPKSKPLTTQIKIKKPPKVTMKTGKSLLHLHSTLEMFAARWRSKAPMSLFLLEVHFNLKVQYSVHENQLQMATSLDRLLSLSRKSSSIGNFNERELTGFITSYLEEAYIPVVNDVLQVGLPLPDFLAMNYNLAELDIVENALMLDLKLG.

The N-terminal stretch at 1–18 (MLRILCLALCSLLTGTRA) is a signal peptide. N-linked (GlcNAc...) asparagine glycosylation is present at asparagine 114. Residues cysteine 137 and cysteine 174 are joined by a disulfide bond. Asparagine 190 is a glycosylation site (N-linked (GlcNAc...) asparagine).

Belongs to the BPI/LBP/Plunc superfamily. BPI/LBP family. In terms of tissue distribution, detected at very low levels in normal tonsils, and at higher levels in hypertrophic tonsils.

The protein resides in the secreted. The sequence is that of BPI fold-containing family B member 6 (BPIFB6) from Homo sapiens (Human).